A 205-amino-acid chain; its full sequence is Transmembrane emp24 domain-containing protein A (205 aa).

The first 24 residues, 1 to 24 (MMNNKLLLLVIALLCIASNSIVES), serve as a signal peptide directing secretion. Topologically, residues 25 to 172 (FSFKVSAKVE…RNTAESTNSR (148 aa)) are lumenal. The GOLD domain occupies 34–116 (EECIYEEIGV…DKTVSFILSV (83 aa)). The chain crosses the membrane as a helical span at residues 173–193 (VLWWSVFEAFVLIALSIWQIY). Over 194 to 205 (YLRRFFEVKRAV) the chain is Cytoplasmic.

Belongs to the EMP24/GP25L family.

It is found in the cytoplasmic vesicle membrane. Could have a role in the budding of coatomer-coated and other species of coated vesicles. The polypeptide is Transmembrane emp24 domain-containing protein A (empA) (Dictyostelium discoideum (Social amoeba)).